The following is a 234-amino-acid chain: Putative N-acetylmannosamine-6-phosphate 2-epimerase (234 aa).

The protein belongs to the NanE family.

The enzyme catalyses an N-acyl-D-glucosamine 6-phosphate = an N-acyl-D-mannosamine 6-phosphate. It participates in amino-sugar metabolism; N-acetylneuraminate degradation; D-fructose 6-phosphate from N-acetylneuraminate: step 3/5. Functionally, converts N-acetylmannosamine-6-phosphate (ManNAc-6-P) to N-acetylglucosamine-6-phosphate (GlcNAc-6-P). This Klebsiella pneumoniae (strain 342) protein is Putative N-acetylmannosamine-6-phosphate 2-epimerase.